The following is a 338-amino-acid chain: Cytochrome c biogenesis protein CcsA (338 aa).

Transmembrane regions (helical) follow at residues 11–31 (VLLDNAAFAALMVATALYWLA), 39–59 (LLHELGTGASAVALLSVTGLL), 76–96 (ESLFFLCWCVLAVHIAAEAFA), 100–120 (LVGVFTLPVALGMVAFSSLTL), 145–165 (VMILSYGALMVGSLVSIAFLI), 244–264 (LIGLGFPLITVGIIAGAVWAN), 278–295 (TWSLITWFIFAAYLHARI), and 305–325 (ATLAAVGFVSVWITYLGVNFL).

The protein belongs to the CcmF/CycK/Ccl1/NrfE/CcsA family. May interact with ccs1.

The protein resides in the cell inner membrane. In terms of biological role, required during biogenesis of c-type cytochromes (cytochrome c6 and cytochrome f) at the step of heme attachment. The protein is Cytochrome c biogenesis protein CcsA of Gloeobacter violaceus (strain ATCC 29082 / PCC 7421).